Here is a 622-residue protein sequence, read N- to C-terminus: Low affinity potassium transport system protein Kup (622 aa).

Transmembrane regions (helical) follow at residues 9-29 (LPAI…TSPL), 49-69 (VFGF…IKYL), 103-123 (VIMG…TPAI), 137-157 (PQLD…LFMI), 165-185 (VGKL…GLGL), 213-233 (VSFI…ALYA), 247-267 (WFTV…ALLL), 276-296 (PFFL…AALA), 337-357 (IYIP…IVSF), 363-383 (LAAA…ILST), 396-416 (FVAL…TANL), and 419-439 (LLSG…VMTT).

Belongs to the HAK/KUP transporter (TC 2.A.72) family.

The protein localises to the cell inner membrane. The enzyme catalyses K(+)(in) + H(+)(in) = K(+)(out) + H(+)(out). Functionally, responsible for the low-affinity transport of potassium into the cell. Likely operates as a K(+):H(+) symporter. The polypeptide is Low affinity potassium transport system protein Kup (Shigella boydii serotype 18 (strain CDC 3083-94 / BS512)).